We begin with the raw amino-acid sequence, 742 residues long: ATP-dependent RNA helicase DBP7 (742 aa).

The tract at residues 45 to 100 (GKTVSRKRKANTTGDEGIIPGRGENSIKKLHKESSYSSEEQEKYKGRNAHNTQGRT) is disordered. The Q motif signature appears at 143-172 (DQFASLGVTSLLVSHLEQKMRIKKPTSIQK). The Helicase ATP-binding domain occupies 178-372 (IIGNAGKNDF…NVALKDYKLI (195 aa)). 191-198 (AQTGSGKT) provides a ligand contact to ATP. The short motif at 307-310 (DEGD) is the DEAD box element. Residues 405–605 (TLAATLNNIT…ILMPAFKDVN (201 aa)) enclose the Helicase C-terminal domain. Positions 701–726 (AMGLQSSKDGNSEKKPTKENSKNKMF) are disordered. Residues 710 to 722 (GNSEKKPTKENSK) show a composition bias toward basic and acidic residues.

It belongs to the DEAD box helicase family. DDX31/DBP7 subfamily.

The protein localises to the nucleus. Its subcellular location is the nucleolus. It carries out the reaction ATP + H2O = ADP + phosphate + H(+). ATP-binding RNA helicase involved in the biogenesis of 60S ribosomal subunits and is required for the normal formation of 25S and 5.8S rRNAs. This Saccharomyces cerevisiae (strain YJM789) (Baker's yeast) protein is ATP-dependent RNA helicase DBP7 (DBP7).